The chain runs to 243 residues: Biosynthetic peptidoglycan transglycosylase (243 aa).

A helical transmembrane segment spans residues 21–43 (LLIVSLVSALMSVLQVIVFRFVD).

It belongs to the glycosyltransferase 51 family.

The protein localises to the cell inner membrane. The catalysed reaction is [GlcNAc-(1-&gt;4)-Mur2Ac(oyl-L-Ala-gamma-D-Glu-L-Lys-D-Ala-D-Ala)](n)-di-trans,octa-cis-undecaprenyl diphosphate + beta-D-GlcNAc-(1-&gt;4)-Mur2Ac(oyl-L-Ala-gamma-D-Glu-L-Lys-D-Ala-D-Ala)-di-trans,octa-cis-undecaprenyl diphosphate = [GlcNAc-(1-&gt;4)-Mur2Ac(oyl-L-Ala-gamma-D-Glu-L-Lys-D-Ala-D-Ala)](n+1)-di-trans,octa-cis-undecaprenyl diphosphate + di-trans,octa-cis-undecaprenyl diphosphate + H(+). It functions in the pathway cell wall biogenesis; peptidoglycan biosynthesis. Peptidoglycan polymerase that catalyzes glycan chain elongation from lipid-linked precursors. This is Biosynthetic peptidoglycan transglycosylase from Xylella fastidiosa (strain Temecula1 / ATCC 700964).